Reading from the N-terminus, the 169-residue chain is Large ribosomal subunit protein bL17 (169 aa).

The interval 124 to 169 is disordered; sequence EKAVKRQDRSRRVKGSKKAIDEKTSDDSASVEAAPAAPEAEEKKDA. Over residues 131-140 the composition is skewed to basic residues; the sequence is DRSRRVKGSK. Residues 150 to 161 are compositionally biased toward low complexity; it reads DSASVEAAPAAP.

Belongs to the bacterial ribosomal protein bL17 family. As to quaternary structure, part of the 50S ribosomal subunit. Contacts protein L32.

The sequence is that of Large ribosomal subunit protein bL17 from Chloroherpeton thalassium (strain ATCC 35110 / GB-78).